Reading from the N-terminus, the 457-residue chain is BAG family molecular chaperone regulator 4 (457 aa).

The interval 1 to 101 is disordered; sequence MSALRRSGYG…QPPYPSYNSN (101 aa). A Phosphoserine modification is found at Ser-7. Over residues 8–20 the composition is skewed to low complexity; it reads GYGPSDGPSYGRY. The span at 30 to 47 shows a compositional bias: pro residues; that stretch reads VHPPPPLYPLRPEPPQPP. An omega-N-methylarginine mark is found at Arg-40, Arg-53, and Arg-108. Disordered stretches follow at residues 113-136, 166-333, and 347-377; these read YPST…NGAY, STEV…DDSD, and LYGN…ESTP. Over residues 166–182 the composition is skewed to polar residues; it reads STEVPSTYRSSGNSPTP. An Omega-N-methylarginine modification is found at Arg-185. Composition is skewed to low complexity over residues 274-284 and 294-308; these read STSPWPSSGSP and QPKD…SDQS. 2 stretches are compositionally biased toward polar residues: residues 320-333 and 347-365; these read QYES…DDSD and LYGN…SSSL. Residues 379–456 enclose the BAG domain; that stretch reads SIKKIIHVLE…AILEKLEKKG (78 aa).

As to quaternary structure, binds to the ATPase domain of HSP/HSC70 chaperones. Binds to the death domain of TNFRSF1A in the absence of TNF and thereby prevents binding of adapter molecules such as TRADD or TRAF2. Binds to the death domain of TNFRSF12. Interacts with PRKN. In terms of tissue distribution, ubiquitous.

It localises to the cytoplasm. Functionally, inhibits the chaperone activity of HSP70/HSC70 by promoting substrate release. Prevents constitutive TNFRSF1A signaling. Negative regulator of PRKN translocation to damaged mitochondria. The sequence is that of BAG family molecular chaperone regulator 4 (BAG4) from Homo sapiens (Human).